The chain runs to 346 residues: Mitogen-activated protein kinase kinase 1c (346 aa).

Positions Leu-70 to Leu-332 constitute a Protein kinase domain. Residues Leu-76–Val-84 and Lys-99 contribute to the ATP site. Catalysis depends on Asp-194, which acts as the Proton acceptor.

The protein belongs to the protein kinase superfamily. STE Ser/Thr protein kinase family. MAP kinase kinase subfamily.

The enzyme catalyses L-seryl-[protein] + ATP = O-phospho-L-seryl-[protein] + ADP + H(+). It catalyses the reaction L-threonyl-[protein] + ATP = O-phospho-L-threonyl-[protein] + ADP + H(+). The catalysed reaction is L-tyrosyl-[protein] + ATP = O-phospho-L-tyrosyl-[protein] + ADP + H(+). The CERK1, MEKK1a/b, MKK1a/b/c and MPK4a/b proteins are involved in pathogen defense. The pathway induces rapid growth inhibition, cell wall depositions and accumulation of defense-related transcripts. This protein is required for full defense response to fungal pathogen chitin. In Physcomitrium patens (Spreading-leaved earth moss), this protein is Mitogen-activated protein kinase kinase 1c.